The chain runs to 1701 residues: Merozoite surface protein 1 (1701 aa).

A signal peptide spans 1 to 19; sequence MKIIFFLCSFLFFIINTQC. Residues 89 to 100 are compositionally biased toward gly residues; the sequence is GSGGSVASGGSG. The tract at residues 89-118 is disordered; it reads GSGGSVASGGSGNSRRTNPSDNSSDSNTKT. The span at 101–116 shows a compositional bias: low complexity; that stretch reads NSRRTNPSDNSSDSNT. Asparagine 110 and asparagine 239 each carry an N-linked (GlcNAc...) asparagine glycan. The segment at 322–344 is disordered; it reads DAENPTTGSKPNPLPENKKKEVE. Asparagine 470, asparagine 536, and asparagine 607 each carry an N-linked (GlcNAc...) asparagine glycan. Residues 704 to 739 form a disordered region; that stretch reads SETTEDGGHSTHTLSQSGETEVTEETEVTEETVGHT. Acidic residues predominate over residues 724-733; sequence EVTEETEVTE. Residues asparagine 802, asparagine 899, asparagine 919, asparagine 965, asparagine 991, asparagine 1089, and asparagine 1196 are each glycosylated (N-linked (GlcNAc...) asparagine). Residues 889–927 show a composition bias toward low complexity; that stretch reads TGTSSTSSPGNTTVNTAQSATHSNSQNQQSNASSTNTQN. Positions 889 to 936 are disordered; that stretch reads TGTSSTSSPGNTTVNTAQSATHSNSQNQQSNASSTNTQNGVAVSSGPA. Disordered regions lie at residues 1230–1259 and 1451–1472; these read TPPQ…TQIP and KEKF…DEQK. The segment covering 1245–1259 has biased composition (polar residues); that stretch reads VSGSSGSTKEETQIP. A compositionally biased stretch (pro residues) spans 1456–1465; that stretch reads SSPPTTPPSP. Asparagine 1588 carries an N-linked (GlcNAc...) asparagine glycan. 2 consecutive EGF-like domains span residues 1592-1632 and 1633-1680; these read HQCV…VENP and NPTC…IFCS. Intrachain disulfides connect cysteine 1594–cysteine 1605, cysteine 1599–cysteine 1615, cysteine 1617–cysteine 1628, cysteine 1636–cysteine 1649, cysteine 1643–cysteine 1663, and cysteine 1665–cysteine 1679. A lipid anchor (GPI-anchor amidated serine) is attached at serine 1680. A propeptide spans 1681–1701 (removed in mature form); sequence SSNFLGISFLLILMLILYSFI.

Forms a complex composed of subunits p83, p30, p38, and p42 which remain non-covalently associated; the complex is formed at the merozoite surface prior to egress from host erythrocytes. Forms a complex composed of processed MSP1 subunits, MSP6 subunit p36 and MSP7; the complex is formed at the merozoite surface prior to egress from host erythrocytes. Within the complex, interacts (via subunit p38) with MSP6 subunit p36 and (via subunits p83, p30 and p38) with MSP7 (via subunit p22). Forms a complex composed of MSP1, MSP6, DBLMSP1 and DBLMSP2. Within the complex, interacts (via subunit p38) with DBLMSP1 and DBLMSP2. Forms a complex composed of MSP1, and rhoptry proteins RhopH3, RAP1 and CLAG9/RhopH3. Within the complex, interacts (via subunits p42 and p19) with RhopH3 (via C-terminus). Forms a complex composed of MSP1, MSP6, MSP7, MSP9 and MSP3; within the complex, MSP6 and MSP9 mediate the binding to the host erythrocyte. Interacts (via subunits p19 and p42) with MSP9; the interaction is direct; MSP1 subunits p19 or p42, and MSP9 form a co-ligand complex that interacts with host SLC4A1/Band 3 protein. May interact with PFD6. Interacts with host spectrin. In terms of assembly, interacts with host glycophorin GYPA in a sialic acid-independent manner. As to quaternary structure, interacts with host proinflammatory cytokine S100P; the interaction blocks S100P inflammatory and chemotactic activities. Interacts with host SLC4A1/Band 3 (via 5ABC region) on the host erythrocyte surface in a sialic acid-independent manner. The p190 precursor is cleaved by SUB1 prior to merozoite egress into 4 subunits p83, p30, p38, and p42 which remain non-covalently associated. SUB1-mediated proteolytic cleavage occurs in an orderly manner; the first cleavage occurs at the p30/p38 site, followed by cleavage at the p83/p30 site, the last cleavage occurs at the p38/p42 site. The order of cleavage is essential for parasite viability. SUB1-mediated processing is essential for merozoite egress. In a second processing step during erythrocyte invasion, p42 is cleaved by SUB2 into p33 and p19; the latter remains attached to the merozoite surface via its GPI-anchor and is endocytosed during the subsequent ring stage.

The protein resides in the cell membrane. The protein localises to the secreted. It localises to the vacuole membrane. Its function is as follows. During the asexual blood stage, involved in merozoite egress from host erythrocytes possibly via its interaction with the host cytoskeleton protein spectrin resulting in the destabilization of the host cytoskeleton and thus leading to erythrocyte cell membrane rupture. Involved in the binding to host erythrocytes and is required for host erythrocyte invasion. In terms of biological role, by binding to host proinflammatory cytokine S100P may interfere with host immune responses. Involved in merozoite invasion of host erythrocytes. May play a role in the biogenesis and/or function of the food vacuole during the intraerythrocytic development. The polypeptide is Merozoite surface protein 1 (Plasmodium falciparum (isolate mad20 / Papua New Guinea)).